Reading from the N-terminus, the 536-residue chain is Phosphoenolpyruvate carboxykinase (ATP) (536 aa).

3 residues coordinate substrate: Arg-61, Tyr-195, and Lys-201. ATP contacts are provided by residues Lys-201, His-220, and 236–244; that span reads GLSGTGKTT. Mn(2+)-binding residues include Lys-201 and His-220. Asp-257 lines the Mn(2+) pocket. ATP-binding residues include Glu-285, Arg-322, and Thr-447. Arg-322 is a substrate binding site.

The protein belongs to the phosphoenolpyruvate carboxykinase (ATP) family. It depends on Mn(2+) as a cofactor.

Its subcellular location is the cytoplasm. The catalysed reaction is oxaloacetate + ATP = phosphoenolpyruvate + ADP + CO2. Its pathway is carbohydrate biosynthesis; gluconeogenesis. In terms of biological role, involved in the gluconeogenesis. Catalyzes the conversion of oxaloacetate (OAA) to phosphoenolpyruvate (PEP) through direct phosphoryl transfer between the nucleoside triphosphate and OAA. This Rhizobium johnstonii (strain DSM 114642 / LMG 32736 / 3841) (Rhizobium leguminosarum bv. viciae) protein is Phosphoenolpyruvate carboxykinase (ATP).